Here is a 562-residue protein sequence, read N- to C-terminus: Abrin-c (562 aa).

Positions 1 to 34 are cleaved as a signal peptide; the sequence is MDKTLKLLILCLAWTCSFSALRCAARTYPPVATN. Q35 bears the Pyrrolidone carboxylic acid mark. E198 is a catalytic residue. N-linked (GlcNAc...) asparagine glycosylation occurs at N234. 3 disulfides stabilise this stretch: C281–C303, C320–C339, and C363–C380. The Ricin B-type lectin 1 domain occupies 307–434; sequence YEPTVRIGGR…YLMRQGWRTG (128 aa). The 1-alpha repeat unit spans residues 317–359; the sequence is DGMCVDVYDDGYHNGNRIIAWKCKDRLEENQLWTLKSDKTIRS. A 1-beta repeat occupies 360–400; the sequence is NGKCLTTEGYAPGNYVMIYDCTSAVAEATYWEIWDNGTIIN. N395 and N435 each carry an N-linked (GlcNAc...) asparagine glycan. The 1-gamma repeat unit spans residues 403–435; sequence SALVLSAESSSMGGTLTVQTNEYLMRQGWRTGN. Residues 437–561 form the Ricin B-type lectin 2 domain; it reads TSPFVTSISG…GKPNQIWLTL (125 aa). Residues 448 to 483 form a 2-alpha repeat; it reads SDLCMQAQGSNVWLADCDNNKKEQQWALYTDGSIRS. 2 cysteine pairs are disulfide-bonded: C451-C464 and C490-C507. A 2-beta repeat occupies 487-526; that stretch reads TNNCLTSKDHKQGSPIVLMACSNGWASQRWLFKNDGSIYN. One copy of the 2-gamma repeat lies at 529 to 562; the sequence is DDMVMDVKRSDPSLKEIILHPYHGKPNQIWLTLF.

This sequence in the N-terminal section; belongs to the ribosome-inactivating protein family. Type 2 RIP subfamily. As to quaternary structure, disulfide-linked dimer of A and B chains.

The enzyme catalyses Endohydrolysis of the N-glycosidic bond at one specific adenosine on the 28S rRNA.. Its function is as follows. The A chain is responsible for inhibiting protein synthesis through the catalytic inactivation of 60S ribosomal subunits by removing adenine from position 4,324 of 28S rRNA. Abrin-a is more toxic than ricin. In terms of biological role, the B chain is a galactose-specific lectin that facilitates the binding of abrin to the cell membrane that precedes endocytosis. This is Abrin-c from Abrus precatorius (Indian licorice).